The following is a 406-amino-acid chain: Luteothin monooxygenase (406 aa).

6 residues coordinate heme b: His-98, Arg-102, Arg-296, Gly-350, His-353, and Cys-355.

It belongs to the cytochrome P450 family. Monomer. The cofactor is heme b.

It catalyses the reaction luteothin + 4 reduced [2Fe-2S]-[ferredoxin] + 2 O2 + 4 H(+) = aureothin + 4 oxidized [2Fe-2S]-[ferredoxin] + 3 H2O. It participates in antibiotic biosynthesis. It functions in the pathway polyketide biosynthesis. Bifunctional cytochrome P450 protein involved in the biosynthesis of the antibiotic aureothin, a nitroaryl polyketide metabolite with antifungal, cytotoxic and insecticidal activities. Catalyzes the hydroxylation of luteothin (also called deoxyaureothin), leading to the formation of the intermediate (7R)-7-hydroxydeoxyaureothin, followed by the formation of the aureothin tetrahydrofuran ring, the final step in the biosynthesis of aureothin. This is Luteothin monooxygenase from Streptomyces thioluteus.